The sequence spans 281 residues: Elongation factor Ts (281 aa).

Residues 86–89 (TDFV) are involved in Mg(2+) ion dislocation from EF-Tu.

Belongs to the EF-Ts family.

It localises to the cytoplasm. In terms of biological role, associates with the EF-Tu.GDP complex and induces the exchange of GDP to GTP. It remains bound to the aminoacyl-tRNA.EF-Tu.GTP complex up to the GTP hydrolysis stage on the ribosome. The polypeptide is Elongation factor Ts (Beutenbergia cavernae (strain ATCC BAA-8 / DSM 12333 / CCUG 43141 / JCM 11478 / NBRC 16432 / NCIMB 13614 / HKI 0122)).